The chain runs to 106 residues: Small ribosomal subunit protein uS10 (106 aa).

The protein belongs to the universal ribosomal protein uS10 family. As to quaternary structure, part of the 30S ribosomal subunit.

Functionally, involved in the binding of tRNA to the ribosomes. This chain is Small ribosomal subunit protein uS10, found in Prochlorococcus marinus (strain MIT 9211).